The chain runs to 126 residues: Large ribosomal subunit protein bL12 (126 aa).

This sequence belongs to the bacterial ribosomal protein bL12 family. Homodimer. Part of the ribosomal stalk of the 50S ribosomal subunit. Forms a multimeric L10(L12)X complex, where L10 forms an elongated spine to which 2 to 4 L12 dimers bind in a sequential fashion. Binds GTP-bound translation factors.

Its function is as follows. Forms part of the ribosomal stalk which helps the ribosome interact with GTP-bound translation factors. Is thus essential for accurate translation. This is Large ribosomal subunit protein bL12 from Bordetella avium (strain 197N).